A 179-amino-acid chain; its full sequence is Crossover junction endodeoxyribonuclease RuvC (179 aa).

Active-site residues include D7, E67, and D139. Residues D7, E67, and D139 each coordinate Mg(2+).

It belongs to the RuvC family. As to quaternary structure, homodimer which binds Holliday junction (HJ) DNA. The HJ becomes 2-fold symmetrical on binding to RuvC with unstacked arms; it has a different conformation from HJ DNA in complex with RuvA. In the full resolvosome a probable DNA-RuvA(4)-RuvB(12)-RuvC(2) complex forms which resolves the HJ. The cofactor is Mg(2+).

It is found in the cytoplasm. The enzyme catalyses Endonucleolytic cleavage at a junction such as a reciprocal single-stranded crossover between two homologous DNA duplexes (Holliday junction).. Functionally, the RuvA-RuvB-RuvC complex processes Holliday junction (HJ) DNA during genetic recombination and DNA repair. Endonuclease that resolves HJ intermediates. Cleaves cruciform DNA by making single-stranded nicks across the HJ at symmetrical positions within the homologous arms, yielding a 5'-phosphate and a 3'-hydroxyl group; requires a central core of homology in the junction. The consensus cleavage sequence is 5'-(A/T)TT(C/G)-3'. Cleavage occurs on the 3'-side of the TT dinucleotide at the point of strand exchange. HJ branch migration catalyzed by RuvA-RuvB allows RuvC to scan DNA until it finds its consensus sequence, where it cleaves and resolves the cruciform DNA. This chain is Crossover junction endodeoxyribonuclease RuvC, found in Sorangium cellulosum (strain So ce56) (Polyangium cellulosum (strain So ce56)).